The sequence spans 294 residues: ATP phosphoribosyltransferase (294 aa).

The protein belongs to the ATP phosphoribosyltransferase family. Long subfamily. Requires Mg(2+) as cofactor.

The protein resides in the cytoplasm. It carries out the reaction 1-(5-phospho-beta-D-ribosyl)-ATP + diphosphate = 5-phospho-alpha-D-ribose 1-diphosphate + ATP. It participates in amino-acid biosynthesis; L-histidine biosynthesis; L-histidine from 5-phospho-alpha-D-ribose 1-diphosphate: step 1/9. Its activity is regulated as follows. Feedback inhibited by histidine. Functionally, catalyzes the condensation of ATP and 5-phosphoribose 1-diphosphate to form N'-(5'-phosphoribosyl)-ATP (PR-ATP). Has a crucial role in the pathway because the rate of histidine biosynthesis seems to be controlled primarily by regulation of HisG enzymatic activity. This is ATP phosphoribosyltransferase from Chlorobium phaeovibrioides (strain DSM 265 / 1930) (Prosthecochloris vibrioformis (strain DSM 265)).